Reading from the N-terminus, the 75-residue chain is Small ribosomal subunit protein bS16 (75 aa).

The protein belongs to the bacterial ribosomal protein bS16 family.

The sequence is that of Small ribosomal subunit protein bS16 from Campylobacter lari (strain RM2100 / D67 / ATCC BAA-1060).